The sequence spans 414 residues: Esterase FrsA (414 aa).

Belongs to the FrsA family.

The enzyme catalyses a carboxylic ester + H2O = an alcohol + a carboxylate + H(+). In terms of biological role, catalyzes the hydrolysis of esters. This Escherichia coli O81 (strain ED1a) protein is Esterase FrsA.